A 134-amino-acid chain; its full sequence is MGKDTIADIITCIRNADMNRKGTVRIVSTNITENIVKILLREGFIENARKHQERNKYFLVLTLRHRRNKKGPYLNTFHLKRVSRPGLRIYSNYQRIPRILGGMGIAILSTSRGIMTDREARLEGIGGEILCYIW.

As to quaternary structure, component of the chloroplast small ribosomal subunit (SSU). Mature 70S chloroplast ribosomes of higher plants consist of a small (30S) and a large (50S) subunit. The 30S small subunit contains 1 molecule of ribosomal RNA (16S rRNA) and 24 different proteins. The 50S large subunit contains 3 rRNA molecules (23S, 5S and 4.5S rRNA) and 33 different proteins.

The protein localises to the plastid. It is found in the chloroplast. Functionally, component of the chloroplast ribosome (chloro-ribosome), a dedicated translation machinery responsible for the synthesis of chloroplast genome-encoded proteins, including proteins of the transcription and translation machinery and components of the photosynthetic apparatus. In Spinacia oleracea (Spinach), this protein is Small ribosomal subunit protein uS8c (rps8).